Here is a 345-residue protein sequence, read N- to C-terminus: Phosphate acyltransferase (345 aa).

It belongs to the PlsX family. As to quaternary structure, homodimer. Probably interacts with PlsY.

Its subcellular location is the cytoplasm. The enzyme catalyses a fatty acyl-[ACP] + phosphate = an acyl phosphate + holo-[ACP]. It functions in the pathway lipid metabolism; phospholipid metabolism. Its function is as follows. Catalyzes the reversible formation of acyl-phosphate (acyl-PO(4)) from acyl-[acyl-carrier-protein] (acyl-ACP). This enzyme utilizes acyl-ACP as fatty acyl donor, but not acyl-CoA. This chain is Phosphate acyltransferase, found in Photorhabdus laumondii subsp. laumondii (strain DSM 15139 / CIP 105565 / TT01) (Photorhabdus luminescens subsp. laumondii).